Consider the following 259-residue polypeptide: Flap endonuclease Xni (259 aa).

Asp109 contributes to the Mg(2+) binding site. The 5'-3' exonuclease domain occupies 165-255 (LKPEQLADYW…FNLQDIRYEK (91 aa)). Positions 176, 177, 187, and 190 each coordinate K(+). The interaction with DNA stretch occupies residues 189–194 (GVGPKA).

The protein belongs to the Xni family. Mg(2+) is required as a cofactor. It depends on K(+) as a cofactor.

Has flap endonuclease activity. During DNA replication, flap endonucleases cleave the 5'-overhanging flap structure that is generated by displacement synthesis when DNA polymerase encounters the 5'-end of a downstream Okazaki fragment. This is Flap endonuclease Xni from Aliivibrio fischeri (strain ATCC 700601 / ES114) (Vibrio fischeri).